A 393-amino-acid chain; its full sequence is Putative F-box/kelch-repeat protein At1g32430 (393 aa).

The 47-residue stretch at Met-1–His-47 folds into the F-box domain. Kelch repeat units lie at residues Tyr-151–Val-199 and Trp-308–Phe-357.

The chain is Putative F-box/kelch-repeat protein At1g32430 from Arabidopsis thaliana (Mouse-ear cress).